Reading from the N-terminus, the 347-residue chain is Phenylalanine--tRNA ligase alpha subunit (347 aa).

Mg(2+) is bound at residue glutamate 262.

The protein belongs to the class-II aminoacyl-tRNA synthetase family. Phe-tRNA synthetase alpha subunit type 1 subfamily. As to quaternary structure, tetramer of two alpha and two beta subunits. Requires Mg(2+) as cofactor.

The protein localises to the cytoplasm. The enzyme catalyses tRNA(Phe) + L-phenylalanine + ATP = L-phenylalanyl-tRNA(Phe) + AMP + diphosphate + H(+). In Roseiflexus sp. (strain RS-1), this protein is Phenylalanine--tRNA ligase alpha subunit.